Consider the following 153-residue polypeptide: ATP synthase subunit b' (153 aa).

The helical transmembrane segment at 23-40 (LMAIQVVALTYILNSLFF) threads the bilayer.

Belongs to the ATPase B chain family. As to quaternary structure, F-type ATPases have 2 components, F(1) - the catalytic core - and F(0) - the membrane proton channel. F(1) has five subunits: alpha(3), beta(3), gamma(1), delta(1), epsilon(1). F(0) has four main subunits: a(1), b(1), b'(1) and c(10-14). The alpha and beta chains form an alternating ring which encloses part of the gamma chain. F(1) is attached to F(0) by a central stalk formed by the gamma and epsilon chains, while a peripheral stalk is formed by the delta, b and b' chains.

Its subcellular location is the cellular thylakoid membrane. F(1)F(0) ATP synthase produces ATP from ADP in the presence of a proton or sodium gradient. F-type ATPases consist of two structural domains, F(1) containing the extramembraneous catalytic core and F(0) containing the membrane proton channel, linked together by a central stalk and a peripheral stalk. During catalysis, ATP synthesis in the catalytic domain of F(1) is coupled via a rotary mechanism of the central stalk subunits to proton translocation. Its function is as follows. Component of the F(0) channel, it forms part of the peripheral stalk, linking F(1) to F(0). The b'-subunit is a diverged and duplicated form of b found in plants and photosynthetic bacteria. The protein is ATP synthase subunit b' of Prochlorococcus marinus (strain AS9601).